A 399-amino-acid chain; its full sequence is Dual-specificity RNA methyltransferase RlmN (399 aa).

Glu121 functions as the Proton acceptor in the catalytic mechanism. The region spanning 127–376 (DVDRGTLCVS…VRTPRGRDIL (250 aa)) is the Radical SAM core domain. Cys134 and Cys379 form a disulfide bridge. Cys141, Cys145, and Cys148 together coordinate [4Fe-4S] cluster. S-adenosyl-L-methionine-binding positions include 205–206 (GE), Ser237, 259–261 (SLH), and Asn336. Residue Cys379 is the S-methylcysteine intermediate of the active site.

It belongs to the radical SAM superfamily. RlmN family. Requires [4Fe-4S] cluster as cofactor.

The protein resides in the cytoplasm. It carries out the reaction adenosine(2503) in 23S rRNA + 2 reduced [2Fe-2S]-[ferredoxin] + 2 S-adenosyl-L-methionine = 2-methyladenosine(2503) in 23S rRNA + 5'-deoxyadenosine + L-methionine + 2 oxidized [2Fe-2S]-[ferredoxin] + S-adenosyl-L-homocysteine. It catalyses the reaction adenosine(37) in tRNA + 2 reduced [2Fe-2S]-[ferredoxin] + 2 S-adenosyl-L-methionine = 2-methyladenosine(37) in tRNA + 5'-deoxyadenosine + L-methionine + 2 oxidized [2Fe-2S]-[ferredoxin] + S-adenosyl-L-homocysteine. Specifically methylates position 2 of adenine 2503 in 23S rRNA and position 2 of adenine 37 in tRNAs. m2A2503 modification seems to play a crucial role in the proofreading step occurring at the peptidyl transferase center and thus would serve to optimize ribosomal fidelity. This Methylocella silvestris (strain DSM 15510 / CIP 108128 / LMG 27833 / NCIMB 13906 / BL2) protein is Dual-specificity RNA methyltransferase RlmN.